The chain runs to 79 residues: Protein GOLVEN 2 (79 aa).

The N-terminal stretch at 1 to 26 is a signal peptide; the sequence is MAIRVSHKSFLVALLLILFISSPTQA. The propeptide occupies 27-65; that stretch reads RSLREVVRNRTLLVVEKSQESRKIRHEGGGSDVDGLMDM. Residues 49 to 79 are disordered; the sequence is KIRHEGGGSDVDGLMDMDYNSANKKRPIHNR. Tyrosine 67 is modified (sulfotyrosine). Hydroxyproline is present on proline 75.

Belongs to the RGF family. In terms of assembly, binds to LRR receptor-like serine/threonine-protein kinases to trigger their dimerization with SERK proteins and subsequent signaling. In terms of tissue distribution, expressed in siliques, stems, hypocotyls, shoot apex, leaves, flowers and cotyledons, and, to a lower extent, in roots.

The protein resides in the secreted. The protein localises to the endoplasmic reticulum. In terms of biological role, signaling peptide (root growth factor) that regulates the pattern of root growth and lateral root development by modulating the length and the number of cortical cells in the root apical meristem (RAM), and the anticlinal asymmetric cell divisions in lateral root initiation cells. Also involved in the regulation of hypocotyl bending and root gravitropism, probably by influencing the formation of auxin gradients. Maintains the postembryonic root stem cell niche. The protein is Protein GOLVEN 2 of Arabidopsis thaliana (Mouse-ear cress).